The following is a 322-amino-acid chain: Replication factor C small subunit (322 aa).

46–53 (GSAGVGKT) provides a ligand contact to ATP.

This sequence belongs to the activator 1 small subunits family. RfcS subfamily. In terms of assembly, heteromultimer composed of small subunits (RfcS) and large subunits (RfcL).

Functionally, part of the RFC clamp loader complex which loads the PCNA sliding clamp onto DNA. The sequence is that of Replication factor C small subunit from Methanoregula boonei (strain DSM 21154 / JCM 14090 / 6A8).